The sequence spans 127 residues: UPF0212 protein VNG_1264C (127 aa).

It belongs to the UPF0212 family.

The chain is UPF0212 protein VNG_1264C from Halobacterium salinarum (strain ATCC 700922 / JCM 11081 / NRC-1) (Halobacterium halobium).